Consider the following 129-residue polypeptide: M-zodatoxin-Lt8l (129 aa).

A signal peptide spans 1 to 20; the sequence is MKYFVVXXALVAAFACIAES. A propeptide spanning residues 21–60 is cleaved from the precursor; it reads KPAESEHELAEVEEENELADLEDAVWLEDLADLSDLEETR.

It belongs to the cationic peptide 06 (cytoinsectotoxin) family. As to expression, expressed by the venom gland.

The protein localises to the secreted. Insecticidal, cytolytic and antimicrobial peptide. Forms voltage-dependent, ion-permeable channels in membranes. At high concentration causes cell membrane lysis. In Lachesana tarabaevi (Spider), this protein is M-zodatoxin-Lt8l (cit 1-12).